Here is a 697-residue protein sequence, read N- to C-terminus: DNA ligase (697 aa).

NAD(+) is bound by residues 44 to 48 (DGEFD), 93 to 94 (SL), and E123. K125 (N6-AMP-lysine intermediate) is an active-site residue. The NAD(+) site is built by R146, E186, K302, and K326. 4 residues coordinate Zn(2+): C420, C423, C439, and C445. The BRCT domain occupies 609–697 (SIPRNLEGLS…GPDAVTDSGV (89 aa)).

It belongs to the NAD-dependent DNA ligase family. LigA subfamily. It depends on Mg(2+) as a cofactor. Mn(2+) is required as a cofactor.

It catalyses the reaction NAD(+) + (deoxyribonucleotide)n-3'-hydroxyl + 5'-phospho-(deoxyribonucleotide)m = (deoxyribonucleotide)n+m + AMP + beta-nicotinamide D-nucleotide.. DNA ligase that catalyzes the formation of phosphodiester linkages between 5'-phosphoryl and 3'-hydroxyl groups in double-stranded DNA using NAD as a coenzyme and as the energy source for the reaction. It is essential for DNA replication and repair of damaged DNA. This is DNA ligase from Rhodococcus opacus (strain B4).